The primary structure comprises 572 residues: Transducin-like enhancer protein 6 (572 aa).

Disordered stretches follow at residues 1–30, 92–121, and 174–236; these read MTSR…SSPT, QSEE…SSFE, and KAKP…VQEP. The span at 14–30 shows a compositional bias: polar residues; sequence KSTSPCPGISNSESSPT. WD repeat units lie at residues 284–322, 332–372, 377–416, 419–456, 458–497, 499–538, and 540–571; these read AHGE…AEDR, TPGA…LHVK, CAGL…VVRD, GYPD…KPLE, QFKS…RHMV, QKDS…KVFE, and PEMS…YQIT. Position 510 is a phosphoserine; by PKA (serine 510).

This sequence belongs to the WD repeat Groucho/TLE family. Homodimers. Component of the subcortical maternal complex (SCMC), at least composed of NLRP5, KHDC3, OOEP, and TLE6. Within the complex, interacts with NLRP5, KHDC3 and OOEP. The SCMC may facilitate translocation of its components between the nuclear and cytoplasmic compartments. As part of the SCMC interacts with the SCMC-associated protein ZBED3. As part of the SCMC interacts with the SCMC-associated protein NLRP4F. As part of the SCMC interacts with the SCMC-associated protein CFL1/Cofilin-1. Interacts with FOXG1/BF-1; the interaction inhibits TLE1 interaction with FOXG1/BF-1. Interacts with NFATC1. Interacts with PAX6. As to quaternary structure, component of the subcortical maternal complex (SCMC), at least composed of NLRP5, KHDC3L, OOEP, and TLE6 isoform 1. Within the complex, interacts with NLRP5, KHDC3L and OOEP. The SCMC may facilitate translocation of its components between the nuclear and cytoplasmic compartments.

It localises to the cytoplasm. It is found in the nucleus. Component of the subcortical maternal complex (SCMC), a multiprotein complex that plays a key role in early embryonic development. The SCMC complex is a structural constituent of cytoplasmic lattices, which consist in fibrous structures found in the cytoplasm of oocytes and preimplantation embryos. They are required to store maternal proteins critical for embryonic development, such as proteins that control epigenetic reprogramming of the preimplantation embryo, and prevent their degradation or activation. Also required for spermatogenesis: regulates spermatogonia proliferation and cell cycle progression, potentially via regulation of cell cycle regulatory genes such as; CEBPB, CEBPA, CSF3, PCNA, and CDK4. Suppresses FOXG1/BF-1-mediated transcriptional repression by inhibiting interaction of the transcriptional corepressor TLE1 with FOXG1 which promotes cortical neuron differentiation. Acts as a transcriptional corepressor of NFATC1-mediated gene expression by contributing to PAX6-mediated repression. Functionally, component of the subcortical maternal complex (SCMC), a multiprotein complex that plays a key role in early embryonic development. This is Transducin-like enhancer protein 6 from Homo sapiens (Human).